We begin with the raw amino-acid sequence, 231 residues long: Large ribosomal subunit protein uL1 (231 aa).

It belongs to the universal ribosomal protein uL1 family. As to quaternary structure, part of the 50S ribosomal subunit.

In terms of biological role, binds directly to 23S rRNA. The L1 stalk is quite mobile in the ribosome, and is involved in E site tRNA release. Its function is as follows. Protein L1 is also a translational repressor protein, it controls the translation of the L11 operon by binding to its mRNA. In Polaromonas sp. (strain JS666 / ATCC BAA-500), this protein is Large ribosomal subunit protein uL1.